The primary structure comprises 229 residues: uncharacterized protein (229 aa).

A run of 7 helical transmembrane segments spans residues 21 to 41 (IYSL…LMLY), 56 to 76 (MIYY…SSAA), 83 to 103 (ALPI…FIIV), 109 to 129 (TVFQ…IIGV), 141 to 161 (AMFA…FIGS), 162 to 182 (GMMS…LIAS), and 202 to 222 (WAVA…ISLL).

It belongs to the BI1 family.

It localises to the cell membrane. This is an uncharacterized protein from Streptococcus pyogenes serotype M1.